Here is a 345-residue protein sequence, read N- to C-terminus: MTTGHGVGPADAAGGPARHLPVMLAEVLAHLAPKDAGRYVDGTFGAGGYTRGILNAADCRVLAIDRDPTAIAAGADLVAEAAGRLTLVNDRFSRLDAVAQEHDFSPLDGVVLDIGVSSMQLDQAERGFSFRRDGPLDMRMGDTGPSAADLVATLDEVQLAHLIWSLGEERHSRPIARAIVKARDESPITRTAQLAEIVSRIVWQKPGEMHPATRTFQALRIAVNEELSELVQALVAAERALAPGGRLVVVTFHSLEDRIVKTFLSNRAKAPSASRHLPQAEGPEPAFRLVAKGVVEPGPDEVAGNPRARSAKLRAAERTNAPAHPGGDLMGLLPAPPPQRHGRRR.

S-adenosyl-L-methionine contacts are provided by residues glycine 47–tyrosine 49, aspartate 65, phenylalanine 92, aspartate 113, and glutamine 120. The tract at residues glutamate 296–arginine 345 is disordered.

The protein belongs to the methyltransferase superfamily. RsmH family.

Its subcellular location is the cytoplasm. It catalyses the reaction cytidine(1402) in 16S rRNA + S-adenosyl-L-methionine = N(4)-methylcytidine(1402) in 16S rRNA + S-adenosyl-L-homocysteine + H(+). Specifically methylates the N4 position of cytidine in position 1402 (C1402) of 16S rRNA. This Xanthobacter autotrophicus (strain ATCC BAA-1158 / Py2) protein is Ribosomal RNA small subunit methyltransferase H.